Consider the following 328-residue polypeptide: Tetraacyldisaccharide 4'-kinase (328 aa).

Position 55–62 (55–62 (TAGGNGKT)) interacts with ATP.

Belongs to the LpxK family.

The catalysed reaction is a lipid A disaccharide + ATP = a lipid IVA + ADP + H(+). It participates in glycolipid biosynthesis; lipid IV(A) biosynthesis; lipid IV(A) from (3R)-3-hydroxytetradecanoyl-[acyl-carrier-protein] and UDP-N-acetyl-alpha-D-glucosamine: step 6/6. In terms of biological role, transfers the gamma-phosphate of ATP to the 4'-position of a tetraacyldisaccharide 1-phosphate intermediate (termed DS-1-P) to form tetraacyldisaccharide 1,4'-bis-phosphate (lipid IVA). This Shigella boydii serotype 4 (strain Sb227) protein is Tetraacyldisaccharide 4'-kinase.